A 144-amino-acid chain; its full sequence is MNFKYIVAVSFLIASGYARSEENDVQSLSQREVLEEETLREIRGIGGALLSAGKSALKGLAKGLAEHFANGKRTAKGHEVMKRLEAVMRDLDSLDHPEEASERETRGFNQEEIANLFTKKEKRILGPVLSLVGSALGGLIKKIG.

The N-terminal stretch at 1-18 is a signal peptide; it reads MNFKYIVAVSFLIASGYA. Positions 19–43 are excised as a propeptide; that stretch reads RSEENDVQSLSQREVLEEETLREIR. N70 carries the asparagine amide modification. Positions 74–123 are excised as a propeptide; sequence TAKGHEVMKRLEAVMRDLDSLDHPEEASERETRGFNQEEIANLFTKKEKR. Residue I143 is modified to Isoleucine amide.

The protein belongs to the bombinin family. Expressed by the skin glands.

The protein localises to the secreted. Its function is as follows. Shows antimicrobial activity against bacteria and against the fungus C.albicans. It has little hemolytic activity. Shows antimicrobial activity against bacteria and against the fungus C.albicans. Shows strong hemolytic activity. This is Maximins 6/Hv from Bombina maxima (Giant fire-bellied toad).